Here is an 861-residue protein sequence, read N- to C-terminus: Probable linoleate 9S-lipoxygenase 7 (861 aa).

The PLAT domain occupies 29-160 (NVLDFTDLAG…NYKSDRIFFA (132 aa)). The Lipoxygenase domain occupies 163–861 (PYLPSETPEL…GKGIPNSVSI (699 aa)). Positions 220-246 (TLGGSAEYPYPRRGRTGRPPTRTDPKS) are disordered. Fe cation is bound by residues H522, H527, H713, N717, and I861.

It belongs to the lipoxygenase family. Monomer. It depends on Fe cation as a cofactor. Expressed in tubers. Detected in sprouts and flowers. but not in leaves or stems.

It is found in the cytoplasm. It catalyses the reaction (9Z,12Z)-octadecadienoate + O2 = (9S)-hydroperoxy-(10E,12Z)-octadecadienoate. It participates in lipid metabolism; oxylipin biosynthesis. Functionally, plant lipoxygenases may be involved in a number of diverse aspects of plant physiology including growth and development, pest resistance, and senescence or responses to wounding. Catalyzes the hydroperoxidation of lipids containing a cis,cis-1,4-pentadiene structure. The sequence is that of Probable linoleate 9S-lipoxygenase 7 (LOX1.7) from Solanum tuberosum (Potato).